Consider the following 193-residue polypeptide: Large ribosomal subunit protein bL17m (193 aa).

The protein belongs to the bacterial ribosomal protein bL17 family. Component of the mitochondrial large ribosomal subunit (mt-LSU). Mature N.crassa 74S mitochondrial ribosomes consist of a small (37S) and a large (54S) subunit. The 37S small subunit contains a 16S ribosomal RNA (16S mt-rRNA) and 32 different proteins. The 54S large subunit contains a 23S rRNA (23S mt-rRNA) and 42 different proteins.

Its subcellular location is the mitochondrion. Functionally, component of the mitochondrial ribosome (mitoribosome), a dedicated translation machinery responsible for the synthesis of mitochondrial genome-encoded proteins, including at least some of the essential transmembrane subunits of the mitochondrial respiratory chain. The mitoribosomes are attached to the mitochondrial inner membrane and translation products are cotranslationally integrated into the membrane. The sequence is that of Large ribosomal subunit protein bL17m (mrpl8) from Neurospora crassa (strain ATCC 24698 / 74-OR23-1A / CBS 708.71 / DSM 1257 / FGSC 987).